The sequence spans 170 residues: MASVFSSLRRSLKGLLVLIPVLIGLAVTSPAQAAQWDAETLTVPADPSGTEVTFSDREIDSGRKVFNTSCGTCHAGGITKTNHNVGLDPETLALATPARDNVEALVDYMKDPTSYDGEYSIADLHPSMRDAELYPAMRDLDDEDLRLMAGYILVSPKVQGSAWGGGKIYF.

The signal sequence occupies residues 1 to 33; sequence MASVFSSLRRSLKGLLVLIPVLIGLAVTSPAQA. Positions 70, 73, 74, and 125 each coordinate heme c.

It belongs to the cytochrome c family. PsbV subfamily. As to quaternary structure, PSII is composed of 1 copy each of membrane proteins PsbA, PsbB, PsbC, PsbD, PsbE, PsbF, PsbH, PsbI, PsbJ, PsbK, PsbL, PsbM, PsbT, PsbX, PsbY, PsbZ, Psb30/Ycf12, peripheral proteins PsbO, CyanoQ (PsbQ), PsbU, PsbV and a large number of cofactors. It forms dimeric complexes. It depends on heme c as a cofactor.

Its subcellular location is the cellular thylakoid membrane. Functionally, one of the extrinsic, lumenal subunits of photosystem II (PSII). PSII is a light-driven water plastoquinone oxidoreductase, using light energy to abstract electrons from H(2)O, generating a proton gradient subsequently used for ATP formation. The extrinsic proteins stabilize the structure of photosystem II oxygen-evolving complex (OEC), the ion environment of oxygen evolution and protect the OEC against heat-induced inactivation. Low-potential cytochrome c that plays a role in the OEC of PSII. This Synechococcus sp. (strain CC9605) protein is Photosystem II extrinsic protein V.